A 244-amino-acid chain; its full sequence is Small ribosomal subunit protein eS6 (244 aa).

The tract at residues 185–244 is disordered; sequence RLQRKRHMRAVKRRRYAKQREEEATYAKLLAKRKKEEREAHAKRRSSARESSLRESKSKA. Positions 186–201 are enriched in basic residues; the sequence is LQRKRHMRAVKRRRYA. The span at 231 to 244 shows a compositional bias: basic and acidic residues; it reads SARESSLRESKSKA.

The protein belongs to the eukaryotic ribosomal protein eS6 family. In terms of processing, ribosomal protein S6 is the major substrate of protein kinases in eukaryote ribosomes.

Its function is as follows. Component of the 40S small ribosomal subunit. Plays an important role in controlling cell growth and proliferation through the selective translation of particular classes of mRNA. The protein is Small ribosomal subunit protein eS6 (RPS6) of Branchiostoma floridae (Florida lancelet).